We begin with the raw amino-acid sequence, 217 residues long: Octanoyltransferase (217 aa).

Positions Asp-32–Gln-207 constitute a BPL/LPL catalytic domain. Substrate-binding positions include Arg-71–His-78, Ser-138–Gly-140, and Gly-151–Ala-153. Cys-169 acts as the Acyl-thioester intermediate in catalysis.

Belongs to the LipB family.

The protein resides in the cytoplasm. It catalyses the reaction octanoyl-[ACP] + L-lysyl-[protein] = N(6)-octanoyl-L-lysyl-[protein] + holo-[ACP] + H(+). It participates in protein modification; protein lipoylation via endogenous pathway; protein N(6)-(lipoyl)lysine from octanoyl-[acyl-carrier-protein]: step 1/2. In terms of biological role, catalyzes the transfer of endogenously produced octanoic acid from octanoyl-acyl-carrier-protein onto the lipoyl domains of lipoate-dependent enzymes. Lipoyl-ACP can also act as a substrate although octanoyl-ACP is likely to be the physiological substrate. The protein is Octanoyltransferase of Pseudoalteromonas translucida (strain TAC 125).